Reading from the N-terminus, the 425-residue chain is Intermediate conductance calcium-activated potassium channel protein 4 (425 aa).

The helical transmembrane segment at 30–50 (LVLAGTGIGLMVLHAEMLWFL) threads the bilayer. The chain crosses the membrane as a helical span at residues 59-79 (LLVKCLITLSTAFLLCLIVVF). Residues 105-121 (VAQILLELLVCGVHPVP) traverse the membrane as a helical segment. A helical membrane pass occupies residues 141 to 161 (GFLGEGEALLSLAMLLRLYLV). Residues 205–225 (LLLGLTLGLWLTTAWVLSVAE) traverse the membrane as a helical segment. Residues 239–259 (LWLIPITFLTIGYGDVVPGTL) constitute an intramembrane region (pore-forming). The chain crosses the membrane as a helical span at residues 263 to 283 (IVCLCTGVMGVCCTALLVAVV). The calmodulin-binding stretch occupies residues 284 to 345 (ARKLEFNKAE…RRHQRKMLAA (62 aa)). At His-356 the chain carries Phosphohistidine.

This sequence belongs to the potassium channel KCNN family. KCa3.1/KCNN4 subfamily. As to quaternary structure, homodimer. Homotetramer. Heterotetramer of potassium channel proteins. Interacts with MTMR6; this interaction leads to selective dephosphorylation of PI(3)P in a lipid microdomain adjacent to KCNN4, resulting in a decrease of intermediate conductance calcium-activated potassium channel activity. Interacts (via the C-tail domain) with CALM1; the calmodulin binding is constitutive, does not require calcium and mediates calcium-dependent gating and four calmodulin molecules bind to one channel tetramer. Post-translationally, phosphorylation at His-356 by NDKB activates the intermediate conductance calcium-activated potassium channel activity, and conversely it's dephosphorylation by PHPT1 inhibits this activity.

The protein resides in the cell membrane. The protein localises to the cell projection. It is found in the ruffle membrane. It carries out the reaction K(+)(in) = K(+)(out). In terms of biological role, intermediate conductance calcium-activated potassium channel that mediates the voltage-independent transmembrane transfer of potassium across the cell membrane through a constitutive interaction with calmodulin which binds the intracellular calcium allowing its opening. The current is characterized by a voltage-independent activation, an intracellular calcium concentration increase-dependent activation and a single-channel conductance of about 25 picosiemens. Also presents an inwardly rectifying current, thus reducing its already small outward conductance of potassium ions, which is particularly the case when the membrane potential displays positive values, above + 20 mV. Controls calcium influx during vascular contractility by being responsible of membrane hyperpolarization induced by vasoactive factors in proliferative vascular smooth muscle cell types. Following calcium influx, the consecutive activation of KCNN4 channel leads to a hyperpolarization of the cell membrane potential and hence an increase of the electrical driving force for further calcium influx promoting sustained calcium entry in response to stimulation with chemotactic peptides. Required for maximal calcium influx and proliferation during the reactivation of naive T-cells. Plays a role in the late stages of EGF-induced macropinocytosis through activation by PI(3)P. This is Intermediate conductance calcium-activated potassium channel protein 4 from Rattus norvegicus (Rat).